A 468-amino-acid polypeptide reads, in one-letter code: Adenosylhomocysteinase (468 aa).

Substrate is bound by residues T57, D132, and E194. 195–197 (TTT) serves as a coordination point for NAD(+). Residues K224 and D228 each contribute to the substrate site. NAD(+) is bound by residues N229, 258 to 263 (GFGDVG), E281, N316, 337 to 339 (IGH), and N382.

Belongs to the adenosylhomocysteinase family. NAD(+) is required as a cofactor.

The protein resides in the cytoplasm. It catalyses the reaction S-adenosyl-L-homocysteine + H2O = L-homocysteine + adenosine. The protein operates within amino-acid biosynthesis; L-homocysteine biosynthesis; L-homocysteine from S-adenosyl-L-homocysteine: step 1/1. Functionally, may play a key role in the regulation of the intracellular concentration of adenosylhomocysteine. This is Adenosylhomocysteinase from Methylobacterium nodulans (strain LMG 21967 / CNCM I-2342 / ORS 2060).